The following is an 85-amino-acid chain: Large ribosomal subunit protein bL27 (85 aa).

Positions 1–22 (MAHKKAGGSTRNGRDSESKRLG) are disordered.

The protein belongs to the bacterial ribosomal protein bL27 family.

In Vibrio parahaemolyticus serotype O3:K6 (strain RIMD 2210633), this protein is Large ribosomal subunit protein bL27.